The primary structure comprises 415 residues: NAD-dependent protein deacetylase hst4 (415 aa).

A disordered region spans residues 1 to 26; it reads MKVEEHVPLIQESRKRKCQSSENASK. One can recognise a Deacetylase sirtuin-type domain in the interval 40 to 337; sequence TGNENVDLSP…RRLKPLLDAP (298 aa). NAD(+) is bound by residues 65 to 84 and 153 to 156; these read GAGI…EGLF and QNID. Histidine 184 serves as the catalytic Proton acceptor. The Zn(2+) site is built by cysteine 192, cysteine 195, cysteine 214, and cysteine 217. NAD(+) contacts are provided by residues 273–275, 303–305, and leucine 323; these read GTS and NYD.

Belongs to the sirtuin family. Class I subfamily. The cofactor is Zn(2+).

It localises to the nucleus. Its subcellular location is the nucleolus. The enzyme catalyses N(6)-acetyl-L-lysyl-[protein] + NAD(+) + H2O = 2''-O-acetyl-ADP-D-ribose + nicotinamide + L-lysyl-[protein]. Its function is as follows. NAD-dependent histone deacetylase, which contributes to both telomeric and centromeric silencing, proper cell cycle progression, DNA damage control, recombination, and genomic maintenance. The polypeptide is NAD-dependent protein deacetylase hst4 (hst4) (Schizosaccharomyces pombe (strain 972 / ATCC 24843) (Fission yeast)).